A 761-amino-acid chain; its full sequence is MTLSAWIILVTLAMASVLTPEDNVRLRRLTAYVANADASIVLLTYTEYEEGTNHGNSMLWRINDPLEAEYPFDPDDISLLNAERVCPELVGVGDLQYSTHNQAFYFTAQGPDGTSQVYSYNHKLETCTQISFLPISVSNLKVSPKGNSVLFSAEIFVYPNNHASVDDPLNFAHDEFARIQARPYKAFAYEQLYTRHWDEDILPSQYRHLFAARLERSSEYDDDYVRITVDNSIDLMPRFDGDCPMRPFADASSYTFDSHGRYVAFVTQVGSTAAFYTNDSIWITDLQQFLDAKKPVRDVVLPLRCATCWNKARDQRPAFSYDGIFLYYASMDEEQSESDLLRLRKQNVSDLFEYDCDSLFCGPVTGEGVFNLTAGVFDRSIGQFIIPTDSTEDSIYILAEDHARTNLFRYNEESSTVTRLTYNGTLGSLLYLRHNKIFLATMSSYTRPTDLVMLDLTVATEFTATRDPSDTMKDDLIKISYLTDLNRQRLRHIDELQEPEEFYLPSKSFPDQYVHSWYFAPANLRDSHEYPLILYVHGGPESPWANSWSYRWNPQLIAARGYGVLATNFHGSSSFGEVFQKSVRGNWYSYPLEDIMDAWSNIYTHADKAYLSREKVCAMGASFGATFMNYMNSHVNNVTCYVTHDGVFDTMCNALETDELFFPVRELGGFLLDEQVDNQQLYEKWNPARFVENMSAPMLVIHGQKDYRIQVYHGISLFQALRLRGIKTKLVYFPTQSHWVWQPQESLFWHTQVFDWLDTYL.

Positions 1–15 (MTLSAWIILVTLAMA) are cleaved as a signal peptide. Catalysis depends on charge relay system residues serine 622, aspartate 706, and histidine 738.

The protein belongs to the peptidase S9C family.

The protein localises to the membrane. In terms of biological role, may be involved in metabolism of dipeptides or may affect host defense mechanisms. The sequence is that of Dipeptidyl-peptidase 4 (DPP) from Giardia intestinalis (Giardia lamblia).